The following is a 337-amino-acid chain: DNA-directed RNA polymerase subunit alpha (337 aa).

An alpha N-terminal domain (alpha-NTD) region spans residues 1-233 (MIQKNWQELI…DQLSIFVNFE (233 aa)). The segment at 249 to 337 (FNPVLLKKVD…DLAKRYEDQY (89 aa)) is alpha C-terminal domain (alpha-CTD).

Belongs to the RNA polymerase alpha chain family. As to quaternary structure, homodimer. The RNAP catalytic core consists of 2 alpha, 1 beta, 1 beta' and 1 omega subunit. When a sigma factor is associated with the core the holoenzyme is formed, which can initiate transcription.

The enzyme catalyses RNA(n) + a ribonucleoside 5'-triphosphate = RNA(n+1) + diphosphate. DNA-dependent RNA polymerase catalyzes the transcription of DNA into RNA using the four ribonucleoside triphosphates as substrates. The sequence is that of DNA-directed RNA polymerase subunit alpha from Brucella canis (strain ATCC 23365 / NCTC 10854 / RM-666).